The primary structure comprises 330 residues: Methionyl-tRNA formyltransferase (330 aa).

112 to 115 (SLLP) provides a ligand contact to (6S)-5,6,7,8-tetrahydrofolate.

The protein belongs to the Fmt family.

The catalysed reaction is L-methionyl-tRNA(fMet) + (6R)-10-formyltetrahydrofolate = N-formyl-L-methionyl-tRNA(fMet) + (6S)-5,6,7,8-tetrahydrofolate + H(+). Attaches a formyl group to the free amino group of methionyl-tRNA(fMet). The formyl group appears to play a dual role in the initiator identity of N-formylmethionyl-tRNA by promoting its recognition by IF2 and preventing the misappropriation of this tRNA by the elongation apparatus. This is Methionyl-tRNA formyltransferase from Synechococcus sp. (strain RCC307).